A 338-amino-acid polypeptide reads, in one-letter code: Protein RecA (338 aa).

66-73 (GPESSGKT) lines the ATP pocket.

It belongs to the RecA family.

It localises to the cytoplasm. Functionally, can catalyze the hydrolysis of ATP in the presence of single-stranded DNA, the ATP-dependent uptake of single-stranded DNA by duplex DNA, and the ATP-dependent hybridization of homologous single-stranded DNAs. It interacts with LexA causing its activation and leading to its autocatalytic cleavage. This is Protein RecA from Geobacter sulfurreducens (strain ATCC 51573 / DSM 12127 / PCA).